The chain runs to 505 residues: MGLVSSKKPDKEKPIKEKDKGQWSPLKVSAQDKDAPPLPPLVVFNHLTPPPPDEHLDEDKHFVVALYDYTAMNDRDLQMLKGEKLQVLKGTGDWWLARSLVTGREGYVPSNFVARVESLEMERWFFRSQGRKEAERQLLAPINKAGSFLIRESETNKGAFSLSVKDVTTQGELIKHYKIRCLDEGGYYISPRITFPSLQALVQHYSKKGDGLCQRLTLPCVRPAPQNPWAQDEWEIPRQSLRLVRKLGSGQFGEVWMGYYKNNMKVAIKTLKEGTMSPEAFLGEANVMKALQHERLVRLYAVVTKEPIYIVTEYMARGCLLDFLKTDEGSRLSLPRLIDMSAQIAEGMAYIERMNSIHRDLRAANILVSEALCCKIADFGLARIIDSEYTAQEGAKFPIKWTAPEAIHFGVFTIKADVWSFGVLLMEVVTYGRVPYPGMSNPEVIRNLERGYRMPRPDTCPPELYRGVIAECWRSRPEERPTFEFLQSVLEDFYTATERQYELQP.

The tract at residues 1-37 (MGLVSSKKPDKEKPIKEKDKGQWSPLKVSAQDKDAPP) is disordered. Gly-2 is lipidated: N-myristoyl glycine. Positions 7–21 (KKPDKEKPIKEKDKG) are enriched in basic and acidic residues. An SH3 domain is found at 58 to 118 (EDKHFVVALY…PSNFVARVES (61 aa)). One can recognise an SH2 domain in the interval 124–220 (WFFRSQGRKE…GLCQRLTLPC (97 aa)). Residues 241–494 (LRLVRKLGSG…FLQSVLEDFY (254 aa)) form the Protein kinase domain. Residues 247–255 (LGSGQFGEV) and Lys-269 each bind ATP. Residue Asp-360 is the Proton acceptor of the active site. Position 389 is a phosphotyrosine; by autocatalysis (Tyr-389).

Belongs to the protein kinase superfamily. Tyr protein kinase family. SRC subfamily. Interacts with CBL (via SH2 domain). Interacts with CD79A and CD79B (via SH2 domain). In terms of processing, phosphorylated on tyrosine residues after antibody-mediated surface engagement of the B-cell antigen receptor (BCR). Ubiquitination of activated BLK by the UBE3A ubiquitin protein ligase leads to its degradation by the ubiquitin-proteasome pathway. In terms of tissue distribution, expressed in lymphatic organs, pancreatic islets, Leydig cells, striate ducts of salivary glands and hair follicles.

Its subcellular location is the cell membrane. The enzyme catalyses L-tyrosyl-[protein] + ATP = O-phospho-L-tyrosyl-[protein] + ADP + H(+). Antibody-mediated surface engagement of the B-cell antigen receptor (BCR) which results in the phosphorylation of BLK on tyrosine residues, stimulates the enzymatic activity. In terms of biological role, non-receptor tyrosine kinase involved in B-lymphocyte development, differentiation and signaling. B-cell receptor (BCR) signaling requires a tight regulation of several protein tyrosine kinases and phosphatases, and associated coreceptors. Binding of antigen to the B-cell antigen receptor (BCR) triggers signaling that ultimately leads to B-cell activation. Signaling through BLK plays an important role in transmitting signals through surface immunoglobulins and supports the pro-B to pre-B transition, as well as the signaling for growth arrest and apoptosis downstream of B-cell receptor. Specifically binds and phosphorylates CD79A at 'Tyr-188'and 'Tyr-199', as well as CD79B at 'Tyr-196' and 'Tyr-207'. Also phosphorylates the immunoglobulin G receptors FCGR2A, FCGR2B and FCGR2C. With FYN and LYN, plays an essential role in pre-B-cell receptor (pre-BCR)-mediated NF-kappa-B activation. Also contributes to BTK activation by indirectly stimulating BTK intramolecular autophosphorylation. In pancreatic islets, acts as a modulator of beta-cells function through the up-regulation of PDX1 and NKX6-1 and consequent stimulation of insulin secretion in response to glucose. Phosphorylates CGAS, promoting retention of CGAS in the cytosol. The polypeptide is Tyrosine-protein kinase Blk (BLK) (Homo sapiens (Human)).